Reading from the N-terminus, the 488-residue chain is MGDEPLLQKVKIQEDIESVPLLQKVKIQEDIESVKGIRVNNDGEEDGPVTLILLFTTFTALCGTFSYGTAAGFTSPAQTGIMAGLNLSLAEFSFFGAVLTIGGLVGAAMSGKLADVFGRRGALGVSNSFCMAGWLMIAFSQATWSLDIGRLFLGVAAGVASYVVPVYIVEIAPKKVRGTFSAINSLVMCASVAVTYLLGSVISWQKLALISTVPCVFEFVGLFFIPESPRWLSRNGRVKESEVSLQRLRGNNTDITKEAAEIKKYMDNLQEFKEDGFFDLFNPRYSRVVTVGIGLLVLQQLGGLSGYTFYLSSIFKKSGFPNNVGVMMASVVQSVTSVLGIVIVDKYGRRSLLTVATIMMCLGSLITGLSFLFQSYGLLEHYTPISTFMGVLVFLTSITIGIGGIPWVMISEMTPINIKGSAGTLCNLTSWSSNWFVSYTFNFLFQWSSSGVFFIYTMISGVGILFVMKMVPETRGRSLEEIQAAITR.

The next 12 membrane-spanning stretches (helical) occupy residues 51-71 (LILLFTTFTALCGTFSYGTAA), 89-109 (LAEFSFFGAVLTIGGLVGAAM), 116-138 (VFGRRGALGVSNSFCMAGWLMIA), 151-171 (LFLGVAAGVASYVVPVYIVEI), 182-202 (AINSLVMCASVAVTYLLGSVI), 207-227 (LALISTVPCVFEFVGLFFIPE), 291-311 (VGIGLLVLQQLGGLSGYTFYL), 324-344 (VGVMMASVVQSVTSVLGIVIV), 353-373 (LTVATIMMCLGSLITGLSFLF), 390-410 (GVLVFLTSITIGIGGIPWVMI), 423-445 (GTLCNLTSWSSNWFVSYTFNFLF), and 451-471 (GVFFIYTMISGVGILFVMKMV).

It belongs to the major facilitator superfamily. Sugar transporter (TC 2.A.1.1) family.

The protein resides in the membrane. Functionally, sugar transporter. The polypeptide is Putative sugar transporter ERD6-like 13 (Arabidopsis thaliana (Mouse-ear cress)).